The primary structure comprises 548 residues: MAQVINTNSLSLITQNNINKNQSALSSSIERLSSGLRINSAKDDAAGQAIANRFTSNIKGLTQAARNANDGISVAQTTEGALSEINNNLQRIRELTVQASTGTNSDSDLDSIQDEIKSRLDEIDRVSGQTQFNGVNVLAKDGSMKIQVGANDGQTITIDLKKIDSDTLGLNGFNVNGKGETANTAATLKDMSGFTAAAAPGGTVGVTQYTDKSAVASSVDILNAVAGADGNKVTTSADVGFGTPAAAVTYTYNKDTNSYSAASDDISSANLAAFLNPQARDTTKATVTIGGKDQDVNIDKSGNLTAADDGAVLYMDATGNLTKNNAGGDTQATLAKVATATGAKAATIQTDKGTFTSDGTAFDGASMSIDANTFANAVKNDTYTATVGAKTYSVTTGSAAADTAYMSNGVLSDTPPTYYAQADGSITTTEDAAAGKLVYKGSDGKLTTDTTSKAESTSDPLAALDDAISQIDKFRSSLGAVQNRLDSAVTNLNNTTTNLSEAQSRIQDADYATEVSNMSKAQIIQQAGNSVLAKANQVPQQVLSLLQG.

The protein belongs to the bacterial flagellin family.

It is found in the secreted. Its subcellular location is the bacterial flagellum. Its function is as follows. Flagellin is the subunit protein which polymerizes to form the filaments of bacterial flagella. The protein is Flagellin (fliC) of Escherichia coli O127:H6 (strain E2348/69 / EPEC).